Consider the following 154-residue polypeptide: uncharacterized protein (154 aa).

The segment at 1 to 37 (MDNLKEKPLSYNINNNNLNNNNNNNNNNNNNNNNINN) is disordered. Residues 12–37 (NINNNNLNNNNNNNNNNNNNNNNINN) are compositionally biased toward low complexity. A glycan (N-linked (GlcNAc...) asparagine) is linked at Asn82. The helical transmembrane segment at 116–136 (IIITTIVVLLMIAVSLGLILA) threads the bilayer. N-linked (GlcNAc...) asparagine glycosylation is present at Asn149.

Its subcellular location is the membrane. This is an uncharacterized protein from Dictyostelium discoideum (Social amoeba).